The primary structure comprises 466 residues: NADH-quinone oxidoreductase subunit N (466 aa).

The next 14 membrane-spanning stretches (helical) occupy residues 9–29 (LIPL…GAIV), 33–53 (CGTV…MLAP), 68–88 (PFTR…LLLA), 100–120 (EEYP…ASAA), 122–142 (FLTL…LVAY), 157–177 (LLMG…LYGA), 190–210 (SAAG…GLAF), 232–252 (VVAF…LLIL), 263–283 (APLW…ALLQ), 289–309 (MLAY…LSGG), 314–334 (AAAF…GALA), 359–379 (GVVL…VGFV), 394–416 (APLA…RVVV), and 438–458 (LSLG…GPLF).

The protein belongs to the complex I subunit 2 family. As to quaternary structure, NDH-1 is composed of 14 different subunits. Subunits NuoA, H, J, K, L, M, N constitute the membrane sector of the complex.

It is found in the cell inner membrane. The catalysed reaction is a quinone + NADH + 5 H(+)(in) = a quinol + NAD(+) + 4 H(+)(out). In terms of biological role, NDH-1 shuttles electrons from NADH, via FMN and iron-sulfur (Fe-S) centers, to quinones in the respiratory chain. The immediate electron acceptor for the enzyme in this species is believed to be ubiquinone. Couples the redox reaction to proton translocation (for every two electrons transferred, four hydrogen ions are translocated across the cytoplasmic membrane), and thus conserves the redox energy in a proton gradient. In Geobacter metallireducens (strain ATCC 53774 / DSM 7210 / GS-15), this protein is NADH-quinone oxidoreductase subunit N.